We begin with the raw amino-acid sequence, 254 residues long: Tumor necrosis factor ligand superfamily member 9 (254 aa).

At 1–28 (MEYASDASLDPEAPWPPAPRARACRVLP) the chain is on the cytoplasmic side. A helical; Signal-anchor for type II membrane protein membrane pass occupies residues 29–49 (WALVAGLLLLLLLAAACAVFL). At 50–254 (ACPWAVSGAR…PAGLPSPRSE (205 aa)) the chain is on the extracellular side. A THD domain is found at 91-240 (MFAQLVAQNV…GATVLGLFRV (150 aa)).

The protein belongs to the tumor necrosis factor family. As to quaternary structure, homotrimer. In terms of tissue distribution, expressed in brain, placenta, lung, skeletal muscle and kidney.

Its subcellular location is the membrane. Its function is as follows. Cytokine that binds to TNFRSF9. Induces the proliferation of activated peripheral blood T-cells. May have a role in activation-induced cell death (AICD). May play a role in cognate interactions between T-cells and B-cells/macrophages. This Homo sapiens (Human) protein is Tumor necrosis factor ligand superfamily member 9 (TNFSF9).